Consider the following 255-residue polypeptide: Probable transcriptional regulatory protein CMM_1817 (255 aa).

The protein belongs to the TACO1 family.

The protein localises to the cytoplasm. This chain is Probable transcriptional regulatory protein CMM_1817, found in Clavibacter michiganensis subsp. michiganensis (strain NCPPB 382).